The primary structure comprises 347 residues: Putative histone PARylation factor 1-like (347 aa).

An N-acetylmethionine modification is found at methionine 1. N6-acetyllysine occurs at positions 187 and 234.

The protein belongs to the HPF1 family.

This is Putative histone PARylation factor 1-like from Homo sapiens (Human).